The sequence spans 317 residues: N(5)-(carboxyethyl)ornithine synthase (317 aa).

Pyruvate is bound by residues Arg15, Lys71, and His92. 172–177 (GSGNVS) is a binding site for NADP(+).

Belongs to the AlaDH/PNT family. CEOS subfamily. As to quaternary structure, homotetramer.

It catalyses the reaction N(5)-[1(S)-1-carboxyethyl]-L-ornithine + NADP(+) + H2O = L-ornithine + pyruvate + NADPH + H(+). Functionally, catalyzes the NADPH-dependent reductive condensation between pyruvic acid and the side chain amino group of L-ornithine to form N(5)-(L-1-carboxyethyl)-L-ornithine. To a lesser extent, can also use L-lysine as substrate (yielding N(6)-(L-1-carboxyethyl)-L-lysine), and the D-isomers of the 2 basic amino acids. Can use alpha-keto acids other than pyruvate, e.g. glyoxylate. In Clostridium botulinum (strain Hall / ATCC 3502 / NCTC 13319 / Type A), this protein is N(5)-(carboxyethyl)ornithine synthase (ceo).